The chain runs to 393 residues: MKNKYYPLRSSMDELSAKNDNEIDLEKGPLPEYNSEDGSTLPPYSENINLKDPKQMGANNPNLFNTDESTTPPDYGEDSLSITHRENHSSGTADNSSTSPLKKAFLSFISIFVLNVPAVCYLTYKDALFKDYGKDEWVYFAVWCASCLMIFISLWYFYETWIKAVKVTVIFLAQCIKVTVVFLAQCVKVTSISLAKCVKLTAVFLAQCVKVTAVFLAQCVKVISIGLFNIRREMMIIIWLLWLIICCILFGCVKSGDLNLNKALIYSTCTISAVLLLIVSSVCIPFWTFERTLAKLAKVFLLQSGIVLVLNGTMFLRGKHFEWTGCEIEASVLFIMGNVLFLCEMECPGALIRTRNSIRNGIAFILEGAGRAIRGANDNNDIPLGEMEVESEV.

Residues 1–98 (MKNKYYPLRS…SSGTADNSST (98 aa)) form a disordered region. Residues 11 to 29 (SMDELSAKNDNEIDLEKGP) show a composition bias toward basic and acidic residues. 2 stretches are compositionally biased toward polar residues: residues 57-72 (GANN…STTP) and 89-98 (SSGTADNSST). 8 helical membrane-spanning segments follow: residues 104–124 (AFLS…YLTY), 137–157 (WVYF…LWYF), 167–187 (VTVI…AQCV), 208–228 (CVKV…IGLF), 233–253 (EMMI…FGCV), 269–289 (CTIS…FWTF), 296–316 (LAKV…TMFL), and 332–352 (VLFI…GALI).

The protein belongs to the WTF family. In terms of assembly, homomer. Forms protein aggregates. The two isoforms can interact with each other and with themselves. High sequence similarity is required for their interaction.

Its subcellular location is the spore membrane. The protein localises to the vacuole membrane. It is found in the ascus epiplasm. It localises to the cytoplasm. The protein resides in the endoplasmic reticulum membrane. Promotes unequal transmission of alleles from the parental zygote to progeny spores by acting as poison/antidote system where the poison and antidote proteins are produced from the same locus; the poison component is trans-acting and targets all spores within an ascus whereas the antidote component is spore-specific, leading to poisoning of all progeny that do not inherit the allele. Its function is as follows. Localizes isoform 2 to the vacuole thereby facilitating its degradation. In terms of biological role, forms toxic aggregates that disrupt spore maturation. This Schizosaccharomyces pombe (strain 972 / ATCC 24843) (Fission yeast) protein is Meiotic driver wtf19.